The chain runs to 346 residues: Putative toluene-4-sulfonate monooxygenase system iron-sulfur subunit TsaM2 (346 aa).

In terms of domain architecture, Rieske spans 7–108 (WYVAGMATDC…LVERHGLLWI (102 aa)). 4 residues coordinate [2Fe-2S] cluster: cysteine 47, histidine 49, cysteine 66, and histidine 69.

Homotetramer. Part of the p-toluenesulfonate methyl-monooxygenase complex TsaBM, comprising the reductase TsaB and the oxygenase TsaM. [2Fe-2S] cluster serves as cofactor.

The catalysed reaction is toluene-4-sulfonate + NADH + O2 + H(+) = 4-(hydroxymethyl)benzenesulfonate + NAD(+) + H2O. Its function is as follows. Involved in the toluene-4-sulfonate degradation pathway. Does not discriminate between the sulfonate and the carboxyl substituents and can also be involved in the p-toluenecarboxylate degradation pathway. The chain is Putative toluene-4-sulfonate monooxygenase system iron-sulfur subunit TsaM2 (tsaM2) from Comamonas testosteroni (Pseudomonas testosteroni).